We begin with the raw amino-acid sequence, 442 residues long: GTPase Der (442 aa).

EngA-type G domains follow at residues 2–167 (RTIA…PIQN) and 175–351 (FKFC…EQAM). GTP contacts are provided by residues 8–15 (GKPNVGKS), 55–59 (DTGGI), 119–122 (NKIE), 181–188 (GRPNVGKS), 228–232 (DTAGI), and 293–296 (NKWD). A KH-like domain is found at 352–436 (RKIATSLLND…PITLYWQDKN (85 aa)).

The protein belongs to the TRAFAC class TrmE-Era-EngA-EngB-Septin-like GTPase superfamily. EngA (Der) GTPase family. As to quaternary structure, associates with the 50S ribosomal subunit.

GTPase that plays an essential role in the late steps of ribosome biogenesis. The chain is GTPase Der from Ureaplasma parvum serovar 3 (strain ATCC 27815 / 27 / NCTC 11736).